A 175-amino-acid chain; its full sequence is Ribosome maturation factor RimM (175 aa).

Positions 100–173 (EGEYYFHEII…IIIIRPMEGL (74 aa)) constitute a PRC barrel domain.

Belongs to the RimM family. Binds ribosomal protein uS19.

The protein resides in the cytoplasm. An accessory protein needed during the final step in the assembly of 30S ribosomal subunit, possibly for assembly of the head region. Essential for efficient processing of 16S rRNA. May be needed both before and after RbfA during the maturation of 16S rRNA. It has affinity for free ribosomal 30S subunits but not for 70S ribosomes. The sequence is that of Ribosome maturation factor RimM from Geobacillus thermodenitrificans (strain NG80-2).